A 308-amino-acid polypeptide reads, in one-letter code: Cytochrome b (308 aa).

Transmembrane regions (helical) follow at residues 1-21 (FGSL…LLAM), 45-66 (WLIR…YLHI), 81-101 (WNIG…GYVL), and 146-166 (FFAF…VHLT). 2 residues coordinate heme b: H51 and H65. Residues H150 and H164 each contribute to the heme b site. H169 is a binding site for a ubiquinone. 3 helical membrane passes run 194–214 (IKDL…ALFS), 256–276 (LGGV…PLLH), and 288–308 (LSQI…WVGS).

It belongs to the cytochrome b family. In terms of assembly, the cytochrome bc1 complex contains 11 subunits: 3 respiratory subunits (MT-CYB, CYC1 and UQCRFS1), 2 core proteins (UQCRC1 and UQCRC2) and 6 low-molecular weight proteins (UQCRH/QCR6, UQCRB/QCR7, UQCRQ/QCR8, UQCR10/QCR9, UQCR11/QCR10 and a cleavage product of UQCRFS1). This cytochrome bc1 complex then forms a dimer. Heme b serves as cofactor.

Its subcellular location is the mitochondrion inner membrane. Its function is as follows. Component of the ubiquinol-cytochrome c reductase complex (complex III or cytochrome b-c1 complex) that is part of the mitochondrial respiratory chain. The b-c1 complex mediates electron transfer from ubiquinol to cytochrome c. Contributes to the generation of a proton gradient across the mitochondrial membrane that is then used for ATP synthesis. This is Cytochrome b (MT-CYB) from Corvus corax (Common raven).